A 417-amino-acid chain; its full sequence is Serine hydroxymethyltransferase (417 aa).

(6S)-5,6,7,8-tetrahydrofolate contacts are provided by residues Leu-121 and 125–127 (GHL). Position 229 is an N6-(pyridoxal phosphate)lysine (Lys-229). A (6S)-5,6,7,8-tetrahydrofolate-binding site is contributed by 355 to 357 (SPF).

It belongs to the SHMT family. As to quaternary structure, homodimer. The cofactor is pyridoxal 5'-phosphate.

It is found in the cytoplasm. The enzyme catalyses (6R)-5,10-methylene-5,6,7,8-tetrahydrofolate + glycine + H2O = (6S)-5,6,7,8-tetrahydrofolate + L-serine. It functions in the pathway one-carbon metabolism; tetrahydrofolate interconversion. The protein operates within amino-acid biosynthesis; glycine biosynthesis; glycine from L-serine: step 1/1. In terms of biological role, catalyzes the reversible interconversion of serine and glycine with tetrahydrofolate (THF) serving as the one-carbon carrier. This reaction serves as the major source of one-carbon groups required for the biosynthesis of purines, thymidylate, methionine, and other important biomolecules. Also exhibits THF-independent aldolase activity toward beta-hydroxyamino acids, producing glycine and aldehydes, via a retro-aldol mechanism. In Salmonella arizonae (strain ATCC BAA-731 / CDC346-86 / RSK2980), this protein is Serine hydroxymethyltransferase.